The chain runs to 744 residues: Catalase-peroxidase (744 aa).

Residues 1-21 (MANESKCPFHQTAGGGTSNRD) are disordered. A cross-link (tryptophyl-tyrosyl-methioninium (Trp-Tyr) (with M-267)) is located at residues 91–241 (WHSAGTYRIG…LAAVQMGLIY (151 aa)). The Proton acceptor role is filled by His92. Residues 241–267 (YVNPEGPEGNPDPVASGKDIRDTFGRM) constitute a cross-link (tryptophyl-tyrosyl-methioninium (Tyr-Met) (with W-91)). His282 serves as a coordination point for heme b. Positions 361 to 387 (GAHQWRPKDGKGANTVPDAHDTTKRHA) are disordered.

Belongs to the peroxidase family. Peroxidase/catalase subfamily. Homodimer or homotetramer. Heme b serves as cofactor. Post-translationally, formation of the three residue Trp-Tyr-Met cross-link is important for the catalase, but not the peroxidase activity of the enzyme.

The catalysed reaction is H2O2 + AH2 = A + 2 H2O. It carries out the reaction 2 H2O2 = O2 + 2 H2O. Functionally, bifunctional enzyme with both catalase and broad-spectrum peroxidase activity. This chain is Catalase-peroxidase, found in Pseudomonas entomophila (strain L48).